A 140-amino-acid chain; its full sequence is ATP synthase epsilon chain (140 aa).

It belongs to the ATPase epsilon chain family. In terms of assembly, F-type ATPases have 2 components, CF(1) - the catalytic core - and CF(0) - the membrane proton channel. CF(1) has five subunits: alpha(3), beta(3), gamma(1), delta(1), epsilon(1). CF(0) has three main subunits: a, b and c.

Its subcellular location is the cell inner membrane. Produces ATP from ADP in the presence of a proton gradient across the membrane. This Neisseria meningitidis serogroup C (strain 053442) protein is ATP synthase epsilon chain.